We begin with the raw amino-acid sequence, 210 residues long: Ribosomal RNA large subunit methyltransferase E (210 aa).

Residues Gly64, Trp66, Asp84, Asn100, and Asp125 each contribute to the S-adenosyl-L-methionine site. Residue Lys165 is the Proton acceptor of the active site.

It belongs to the class I-like SAM-binding methyltransferase superfamily. RNA methyltransferase RlmE family.

The protein resides in the cytoplasm. The enzyme catalyses uridine(2552) in 23S rRNA + S-adenosyl-L-methionine = 2'-O-methyluridine(2552) in 23S rRNA + S-adenosyl-L-homocysteine + H(+). Its function is as follows. Specifically methylates the uridine in position 2552 of 23S rRNA at the 2'-O position of the ribose in the fully assembled 50S ribosomal subunit. In Buchnera aphidicola subsp. Baizongia pistaciae (strain Bp), this protein is Ribosomal RNA large subunit methyltransferase E.